Consider the following 555-residue polypeptide: Probable ferredoxin/ferredoxin--NADP reductase (555 aa).

4Fe-4S ferredoxin-type domains lie at 2-29 (PYII…PTPD) and 37-66 (EMLY…SDTR). The [4Fe-4S] cluster site is built by C9, C15, C19, C46, C49, C52, and C56. The ferredoxin--NADP reductase stretch occupies residues 115-555 (VAIVGSGPAA…APPLRLRALS (441 aa)). Positions 123, 143, 151, and 187 each coordinate FAD. Residues R213, 258 to 261 (NGNV), 302 to 303 (RR), and E314 each bind NADP(+). FAD-binding positions include W453 and 460–462 (GFI). NADP(+) is bound at residue G460.

The protein in the C-terminal section; belongs to the ferredoxin--NADP reductase family. The cofactor is [4Fe-4S] cluster. Requires FAD as cofactor.

It carries out the reaction 2 reduced [2Fe-2S]-[ferredoxin] + NADP(+) + H(+) = 2 oxidized [2Fe-2S]-[ferredoxin] + NADPH. This chain is Probable ferredoxin/ferredoxin--NADP reductase (fprB), found in Mycobacterium leprae (strain TN).